Consider the following 96-residue polypeptide: Small ribosomal subunit protein bS6 (96 aa).

This sequence belongs to the bacterial ribosomal protein bS6 family.

Its function is as follows. Binds together with bS18 to 16S ribosomal RNA. In Streptococcus thermophilus (strain ATCC BAA-491 / LMD-9), this protein is Small ribosomal subunit protein bS6.